The following is a 458-amino-acid chain: Light-independent protochlorophyllide reductase subunit N (458 aa).

[4Fe-4S] cluster is bound by residues Cys22, Cys47, and Cys107.

It belongs to the BchN/ChlN family. Protochlorophyllide reductase is composed of three subunits; ChlL, ChlN and ChlB. Forms a heterotetramer of two ChlB and two ChlN subunits. The cofactor is [4Fe-4S] cluster.

It localises to the plastid. It is found in the chloroplast. It carries out the reaction chlorophyllide a + oxidized 2[4Fe-4S]-[ferredoxin] + 2 ADP + 2 phosphate = protochlorophyllide a + reduced 2[4Fe-4S]-[ferredoxin] + 2 ATP + 2 H2O. It functions in the pathway porphyrin-containing compound metabolism; chlorophyll biosynthesis (light-independent). Its function is as follows. Component of the dark-operative protochlorophyllide reductase (DPOR) that uses Mg-ATP and reduced ferredoxin to reduce ring D of protochlorophyllide (Pchlide) to form chlorophyllide a (Chlide). This reaction is light-independent. The NB-protein (ChlN-ChlB) is the catalytic component of the complex. In Chaetosphaeridium globosum (Charophycean green alga), this protein is Light-independent protochlorophyllide reductase subunit N.